A 443-amino-acid chain; its full sequence is Xaa-Pro dipeptidase (443 aa).

Mn(2+) is bound by residues aspartate 246, aspartate 257, histidine 339, glutamate 384, and glutamate 423.

This sequence belongs to the peptidase M24B family. Bacterial-type prolidase subfamily. Mn(2+) serves as cofactor.

It catalyses the reaction Xaa-L-Pro dipeptide + H2O = an L-alpha-amino acid + L-proline. Its function is as follows. Splits dipeptides with a prolyl residue in the C-terminal position. The sequence is that of Xaa-Pro dipeptidase from Erwinia tasmaniensis (strain DSM 17950 / CFBP 7177 / CIP 109463 / NCPPB 4357 / Et1/99).